The following is a 560-amino-acid chain: Dihydroxy-acid dehydratase (560 aa).

Cys-50 provides a ligand contact to [2Fe-2S] cluster. Asp-82 provides a ligand contact to Mg(2+). A [2Fe-2S] cluster-binding site is contributed by Cys-123. Mg(2+) is bound by residues Asp-124 and Lys-125. Position 125 is an N6-carboxylysine (Lys-125). Cys-195 serves as a coordination point for [2Fe-2S] cluster. A Mg(2+)-binding site is contributed by Glu-446. The active-site Proton acceptor is the Ser-472.

It belongs to the IlvD/Edd family. Homodimer. [2Fe-2S] cluster serves as cofactor. It depends on Mg(2+) as a cofactor.

It carries out the reaction (2R)-2,3-dihydroxy-3-methylbutanoate = 3-methyl-2-oxobutanoate + H2O. The enzyme catalyses (2R,3R)-2,3-dihydroxy-3-methylpentanoate = (S)-3-methyl-2-oxopentanoate + H2O. It functions in the pathway amino-acid biosynthesis; L-isoleucine biosynthesis; L-isoleucine from 2-oxobutanoate: step 3/4. Its pathway is amino-acid biosynthesis; L-valine biosynthesis; L-valine from pyruvate: step 3/4. In terms of biological role, functions in the biosynthesis of branched-chain amino acids. Catalyzes the dehydration of (2R,3R)-2,3-dihydroxy-3-methylpentanoate (2,3-dihydroxy-3-methylvalerate) into 2-oxo-3-methylpentanoate (2-oxo-3-methylvalerate) and of (2R)-2,3-dihydroxy-3-methylbutanoate (2,3-dihydroxyisovalerate) into 2-oxo-3-methylbutanoate (2-oxoisovalerate), the penultimate precursor to L-isoleucine and L-valine, respectively. The chain is Dihydroxy-acid dehydratase from Leptothrix cholodnii (strain ATCC 51168 / LMG 8142 / SP-6) (Leptothrix discophora (strain SP-6)).